A 153-amino-acid chain; its full sequence is Small ribosomal subunit protein bS16 (153 aa).

The segment at Glu-114–Lys-153 is disordered. A compositionally biased stretch (low complexity) spans Ala-137 to Lys-153.

It belongs to the bacterial ribosomal protein bS16 family.

The sequence is that of Small ribosomal subunit protein bS16 from Rhodococcus jostii (strain RHA1).